The primary structure comprises 423 residues: Pseudouridylate synthase 1 homolog (423 aa).

The segment at 32–75 (AGNKVPPALASHQPDRKGRGGWVWEETEHPAKRVKGGEDEEPPR) is disordered. Positions 57-68 (ETEHPAKRVKGG) are enriched in basic and acidic residues. Catalysis depends on Asp-142, which acts as the Nucleophile. The interval 403-423 (ADTGAKVPSSLEGSEGDGDTD) is disordered. Phosphoserine occurs at positions 411 and 416. A Phosphothreonine modification is found at Thr-422.

It belongs to the tRNA pseudouridine synthase TruA family. Monomer. Forms a complex with RARG and the SRA1 RNA in the nucleus.

The protein localises to the nucleus. It localises to the cytoplasm. Its subcellular location is the mitochondrion. The catalysed reaction is a uridine in tRNA = a pseudouridine in tRNA. It catalyses the reaction uridine(38/39/40) in tRNA = pseudouridine(38/39/40) in tRNA. It carries out the reaction a uridine in mRNA = a pseudouridine in mRNA. Its function is as follows. Pseudouridylate synthase that catalyzes pseudouridylation of tRNAs and mRNAs. Acts on positions 27/28 in the anticodon stem and also positions 34 and 36 in the anticodon of an intron containing tRNA. Also catalyzes pseudouridylation of mRNAs: mediates pseudouridylation of mRNAs with the consensus sequence 5'-UGUAG-3'. Acts as a regulator of pre-mRNA splicing by mediating pseudouridylation of pre-mRNAs at locations associated with alternatively spliced regions. Pseudouridylation of pre-mRNAs near splice sites directly regulates mRNA splicing and mRNA 3'-end processing. Involved in regulation of nuclear receptor activity through pseudouridylation of SRA1 mRNA. Does not form pseudouridine when expressed in vitro. The sequence is that of Pseudouridylate synthase 1 homolog from Mus musculus (Mouse).